Consider the following 69-residue polypeptide: Putative transmembrane protein ORF34 (69 aa).

Helical transmembrane passes span 7–27 (LLSVLAIIFYGVMVVGSMMQF) and 42–62 (VSLMLVGICAVVCFYASIVYF).

It is found in the host membrane. The protein is Putative transmembrane protein ORF34 of Haloarcula hispanica (His1V).